The following is a 288-amino-acid chain: Protease HtpX (288 aa).

2 consecutive transmembrane segments (helical) span residues 4 to 24 (VMLFLITNLAVVLVLSVVLNI) and 36 to 56 (LSGLLVMAAVFGFGGAFISLM). Histidine 143 lines the Zn(2+) pocket. The active site involves glutamate 144. Histidine 147 provides a ligand contact to Zn(2+). 2 consecutive transmembrane segments (helical) span residues 151–171 (GDMVTMTLMQGVVNTFVIFLS) and 193–213 (MVYFAVSIALELVFGFLASFI). Glutamate 222 is a binding site for Zn(2+).

Belongs to the peptidase M48B family. Requires Zn(2+) as cofactor.

The protein resides in the cell inner membrane. This chain is Protease HtpX, found in Vibrio vulnificus (strain YJ016).